A 97-amino-acid polypeptide reads, in one-letter code: Osteocalcin (97 aa).

Residues 1-18 (MKTLAFLVLCSLAAICLT) form the signal peptide. Positions 19-52 (SDASTGSQPASDNPADEGMFVERDQASAVVRQKR) are excised as a propeptide. A Gla domain is found at 53–93 (AAGQLSLTQLESLREVCELNLACEHMMDTEGIIAAYTAYYG). Glu-63, Glu-67, Glu-70, and Glu-76 together coordinate Ca(2+). 3 positions are modified to 4-carboxyglutamate: Glu-63, Glu-67, and Glu-70. The cysteines at positions 69 and 75 are disulfide-linked.

The protein belongs to the osteocalcin/matrix Gla protein family. Gamma-carboxyglutamate residues are formed by vitamin K dependent carboxylation by GGCX. These residues are essential for the binding of calcium.

It localises to the secreted. Functionally, the carboxylated form is one of the main organic components of the bone matrix, which constitutes 1-2% of the total bone protein. The carboxylated form binds strongly to apatite and calcium. The sequence is that of Osteocalcin (bglap) from Sparus aurata (Gilthead sea bream).